The primary structure comprises 211 residues: Ribosomal RNA large subunit methyltransferase E (211 aa).

The S-adenosyl-L-methionine site is built by Gly55, Trp57, Asp75, Asp93, and Asp117. Residue Lys157 is the Proton acceptor of the active site.

It belongs to the class I-like SAM-binding methyltransferase superfamily. RNA methyltransferase RlmE family.

Its subcellular location is the cytoplasm. It catalyses the reaction uridine(2552) in 23S rRNA + S-adenosyl-L-methionine = 2'-O-methyluridine(2552) in 23S rRNA + S-adenosyl-L-homocysteine + H(+). In terms of biological role, specifically methylates the uridine in position 2552 of 23S rRNA at the 2'-O position of the ribose in the fully assembled 50S ribosomal subunit. The protein is Ribosomal RNA large subunit methyltransferase E of Methanothermobacter thermautotrophicus (strain ATCC 29096 / DSM 1053 / JCM 10044 / NBRC 100330 / Delta H) (Methanobacterium thermoautotrophicum).